Reading from the N-terminus, the 227-residue chain is GFP-like non-fluorescent chromoprotein (227 aa).

The segment at residues 63 to 65 is a cross-link (5-imidazolinone (Ala-Gly)); that stretch reads AYG. Position 64 is a 2,3-didehydrotyrosine (tyrosine 64).

It belongs to the GFP family. Homotetramer. In terms of processing, contains a chromophore consisting of modified amino acid residues. The chromophore is formed by autocatalytic backbone condensation between Xaa-N and Gly-(N+2), and oxidation of Tyr-(N+1) to didehydrotyrosine. Maturation of the chromophore requires nothing other than molecular oxygen. The precise stereochemistry of the tyrosine has not been determined.

Functionally, non-fluorescent pigment protein that is mauve in color. The wild-type form is non-fluorescent. The protein is GFP-like non-fluorescent chromoprotein of Condylactis gigantea (Giant Caribbean anemone).